Reading from the N-terminus, the 576-residue chain is CTP synthase (576 aa).

The Glutamine amidotransferase type-1 domain maps to 305-559; the sequence is QIALVGKYTH…LGLVAAAANI (255 aa). Residues cysteine 404, histidine 535, and glutamate 537 each act as for GATase activity in the active site.

Belongs to the CTP synthase family.

It catalyses the reaction UTP + L-glutamine + ATP + H2O = CTP + L-glutamate + ADP + phosphate + 2 H(+). The protein operates within pyrimidine metabolism; CTP biosynthesis via de novo pathway; CTP from UDP: step 2/2. Its function is as follows. Catalyzes the ATP-dependent amination of UTP to CTP with either L-glutamine or ammonia as the source of nitrogen. This is CTP synthase (URA7) from Eremothecium gossypii (strain ATCC 10895 / CBS 109.51 / FGSC 9923 / NRRL Y-1056) (Yeast).